The chain runs to 148 residues: Protein TIFY 5B (148 aa).

Positions 54–89 (PKQESQILTIFYNGHMCVSSDLTHLEANAILSLASR) constitute a Tify domain.

Belongs to the TIFY/JAZ family. Post-translationally, ubiquitinated. Targeted for degradation by the SCF(COI1) E3 ubiquitin ligase-proteasome pathway during jasmonate signaling.

The protein resides in the nucleus. In terms of biological role, repressor of jasmonate responses. This chain is Protein TIFY 5B (TIFY 5B), found in Arabidopsis thaliana (Mouse-ear cress).